The chain runs to 144 residues: Giant hemoglobin AIII chain (144 aa).

In terms of domain architecture, Globin spans 2–144; sequence ECGPLQRLKV…DVITGGIQGN (143 aa). Residue histidine 95 coordinates heme b.

It belongs to the globin family. In terms of assembly, giant hemoglobin is composed of four heme-containing chains (AI to AIV), and two linker chains (AV and AVI).

The polypeptide is Giant hemoglobin AIII chain (Lamellibrachia sp. (Deep-sea giant tube worm)).